The chain runs to 452 residues: MGKYFGTSGIREVVNEKLTPELALKVGLALGTYLGEGRVVVGIDTRTSSEMIKHALVSGLLATGIEVVDIGLAPTPLTGFAIKLYNADAGVTITASHNPPNYNGIKVWDRNGMAYTPDKESELERIIEEETFKRVSWMEIGEVIKADPKKEYIKNAVEQINLENSYTVVVDSGNGAGSIVSPYLQRELGNKVISLNSHPTGFFVRELEPNRKSLDMLSKVVREVGADVGIAHDGDADRIGVVDDQGNFVDYEVMLSLIAGYMIEKYGKGKVVTTVDAGFALDDYLKPRGGEVIRTKVGDVAVAYELSKHGGVFGGEPSGTWIIPQWNLTPDGIFAGALVVEMIDKLGPISELAKEVPRYVTLREKIPCPNELKQKVMRIIEKLALQNFEYKNLIDIDGIRIENEEWWILFRPSGTEPIMRITLEAHTKEKAEELMKKARGLVKEAIEKAKLS.

Serine 96 serves as the catalytic Phosphoserine intermediate. Mg(2+) is bound by residues serine 96, aspartate 233, aspartate 235, and aspartate 237. The residue at position 96 (serine 96) is a Phosphoserine.

This sequence belongs to the phosphohexose mutase family. Mg(2+) serves as cofactor. Activated by phosphorylation.

It carries out the reaction alpha-D-glucosamine 1-phosphate = D-glucosamine 6-phosphate. Functionally, catalyzes the conversion of glucosamine-6-phosphate to glucosamine-1-phosphate. The sequence is that of Probable phosphoglucosamine mutase from Pyrococcus furiosus (strain ATCC 43587 / DSM 3638 / JCM 8422 / Vc1).